Reading from the N-terminus, the 92-residue chain is uncharacterized protein (92 aa).

2 helical membrane passes run 34 to 54 (GLGI…FMFG) and 65 to 85 (LLYI…ASTV).

Its subcellular location is the cell membrane. This is an uncharacterized protein from Bacillus anthracis.